We begin with the raw amino-acid sequence, 77 residues long: Metallothionein-like protein 2 (77 aa).

The protein belongs to the metallothionein superfamily. Type 15 family.

Its function is as follows. Metallothioneins have a high content of cysteine residues that bind various heavy metals. This Trifolium repens (Creeping white clover) protein is Metallothionein-like protein 2 (MT1A).